Consider the following 127-residue polypeptide: Large ribosomal subunit protein bL21 (127 aa).

The segment at 102–127 is disordered; sequence TDNAKPTKGPRPKKAKAEAPAADAAE.

It belongs to the bacterial ribosomal protein bL21 family. Part of the 50S ribosomal subunit. Contacts protein L20.

In terms of biological role, this protein binds to 23S rRNA in the presence of protein L20. In Bradyrhizobium sp. (strain BTAi1 / ATCC BAA-1182), this protein is Large ribosomal subunit protein bL21.